Here is a 487-residue protein sequence, read N- to C-terminus: Aspyridones efflux protein apdF (487 aa).

Positions methionine 1–glutamate 21 are enriched in basic and acidic residues. The segment at methionine 1 to phenylalanine 25 is disordered. Residues valine 35–valine 55 form a helical membrane-spanning segment. N-linked (GlcNAc...) asparagine glycosylation is present at asparagine 67. 8 helical membrane-spanning segments follow: residues tryptophan 75 to phenylalanine 95, glycine 99 to leucine 119, phenylalanine 126 to leucine 146, alanine 159 to leucine 179, tryptophan 191 to isoleucine 211, valine 234 to leucine 254, glycine 262 to glycine 282, and isoleucine 293 to tryptophan 313. Asparagine 319 carries N-linked (GlcNAc...) asparagine glycosylation. The next 3 membrane-spanning stretches (helical) occupy residues isoleucine 322 to alanine 342, isoleucine 354 to proline 374, and glycine 385 to phenylalanine 405.

This sequence belongs to the major facilitator superfamily. Monocarboxylate porter (TC 2.A.1.13) family.

It is found in the cell membrane. In terms of biological role, efflux pump that may be involved in the secretion of aspyridones. This Emericella nidulans (strain FGSC A4 / ATCC 38163 / CBS 112.46 / NRRL 194 / M139) (Aspergillus nidulans) protein is Aspyridones efflux protein apdF.